A 168-amino-acid polypeptide reads, in one-letter code: 3-dehydroquinate dehydratase (168 aa).

Tyrosine 22 functions as the Proton acceptor in the catalytic mechanism. Substrate contacts are provided by asparagine 76, histidine 82, and aspartate 89. Histidine 102 acts as the Proton donor in catalysis. Residues 103-104 (LT) and arginine 113 each bind substrate.

It belongs to the type-II 3-dehydroquinase family. Homododecamer.

It catalyses the reaction 3-dehydroquinate = 3-dehydroshikimate + H2O. It participates in metabolic intermediate biosynthesis; chorismate biosynthesis; chorismate from D-erythrose 4-phosphate and phosphoenolpyruvate: step 3/7. Its function is as follows. Catalyzes a trans-dehydration via an enolate intermediate. In Helicobacter acinonychis (strain Sheeba), this protein is 3-dehydroquinate dehydratase.